Here is a 515-residue protein sequence, read N- to C-terminus: Protein disulfide-isomerase (515 aa).

An N-terminal signal peptide occupies residues 1–22 (MAVVRVRAIVALLCLVAALGLA). 2 consecutive Thioredoxin domains span residues 23 to 139 (EPLE…KRTG) and 351 to 480 (FLEG…SGGQ). Residues Cys-58, Cys-61, Cys-402, and Cys-405 each act as nucleophile in the active site. Intrachain disulfides connect Cys-58/Cys-61 and Cys-402/Cys-405. A disordered region spans residues 477 to 515 (SGGQDGAAADDDLEDLETDEETDLEEGDDDEQKIQKDEL). Positions 484–507 (AADDDLEDLETDEETDLEEGDDDE) are enriched in acidic residues. Residues 512-515 (KDEL) carry the Prevents secretion from ER motif.

This sequence belongs to the protein disulfide isomerase family. As to quaternary structure, heterodimer; heterodimerizes with the protein microsomal triglyceride transfer MTTP. Homodimer. Monomers and homotetramers may also occur. Also constitutes the structural subunit of prolyl 4-hydroxylase. Stabilizes this enzyme and retains it in the ER without contributing to the catalytic activity. Binds UBQLN1.

It localises to the endoplasmic reticulum. Its subcellular location is the endoplasmic reticulum lumen. The protein localises to the cell membrane. The enzyme catalyses Catalyzes the rearrangement of -S-S- bonds in proteins.. Functionally, this multifunctional protein catalyzes the formation, breakage and rearrangement of disulfide bonds. At the cell surface, seems to act as a reductase that cleaves disulfide bonds of proteins attached to the cell. May therefore cause structural modifications of exofacial proteins. Inside the cell, seems to form/rearrange disulfide bonds of nascent proteins. At high concentrations, functions as a chaperone that inhibits aggregation of misfolded proteins. At low concentrations, facilitates aggregation (anti-chaperone activity). Also acts a structural subunit of various enzymes such as prolyl 4-hydroxylase. This chain is Protein disulfide-isomerase (P4HB), found in Gallus gallus (Chicken).